Reading from the N-terminus, the 122-residue chain is Large ribosomal subunit protein uL14 (122 aa).

It belongs to the universal ribosomal protein uL14 family. In terms of assembly, part of the 50S ribosomal subunit. Forms a cluster with proteins L3 and L19. In the 70S ribosome, L14 and L19 interact and together make contacts with the 16S rRNA in bridges B5 and B8.

Functionally, binds to 23S rRNA. Forms part of two intersubunit bridges in the 70S ribosome. In Bacillus mycoides (strain KBAB4) (Bacillus weihenstephanensis), this protein is Large ribosomal subunit protein uL14.